The following is a 235-amino-acid chain: Fms-related tyrosine kinase 3 ligand (235 aa).

Positions 1 to 26 (MTVLAPAWSPTTYLLLLLLLSSGLSG) are cleaved as a signal peptide. Residues 27-184 (TQDCSFQHSP…EATAPTAPQP (158 aa)) are Extracellular-facing. 3 cysteine pairs are disulfide-bonded: Cys-30-Cys-111, Cys-70-Cys-153, and Cys-119-Cys-158. N-linked (GlcNAc...) asparagine glycans are attached at residues Asn-126 and Asn-149. The chain crosses the membrane as a helical span at residues 185 to 205 (PLLLLLLLPVGLLLLAAAWCL). The Cytoplasmic portion of the chain corresponds to 206-235 (HWQRTRRRTPRPGEQVPPVPSPQDLLLVEH). The interval 213–235 (RTPRPGEQVPPVPSPQDLLLVEH) is disordered.

As to quaternary structure, homodimer (isoform 2).

It is found in the cell membrane. It localises to the secreted. Its function is as follows. Stimulates the proliferation of early hematopoietic cells by activating FLT3. Synergizes well with a number of other colony stimulating factors and interleukins. Required for the development of B cells, and dendritic cells (DCs). The polypeptide is Fms-related tyrosine kinase 3 ligand (FLT3LG) (Homo sapiens (Human)).